We begin with the raw amino-acid sequence, 149 residues long: NPC intracellular cholesterol transporter 2 (149 aa).

The N-terminal stretch at 1 to 19 (MRFLTVAFLFLALSASALA) is a signal peptide. 3 disulfides stabilise this stretch: Cys27–Cys140, Cys42–Cys47, and Cys93–Cys99. Asn58 carries an N-linked (GlcNAc...) asparagine glycan. Lys116 carries the post-translational modification N6-acetyllysine.

It belongs to the NPC2 family. In terms of assembly, interacts with NPC1 (via the second lumenal domain) in a cholestrol-dependent manner. Interacts with NUS1/NgBR, the interaction stabilizes NCP2 and regulates cholesterol trafficking. Interacts with DHDDS. Interacts with NEDD4L (via C2 domain). Interacts with NPC1L1. Expressed in kidney, spleen, liver and mammary gland, but not in testis.

It is found in the secreted. It localises to the endoplasmic reticulum. Its subcellular location is the lysosome. It catalyses the reaction cholesterol(in) = cholesterol(out). Intracellular cholesterol transporter which acts in concert with NPC1 and plays an important role in the egress of cholesterol from the lysosomal compartment. Unesterified cholesterol that has been released from LDLs in the lumen of the late endosomes/lysosomes is transferred by NPC2 to the cholesterol-binding pocket in the N-terminal domain of NPC1. May bind and mobilize cholesterol that is associated with membranes. NPC2 binds cholesterol with a 1:1 stoichiometry. Can bind a variety of sterols, including lathosterol, desmosterol and the plant sterols stigmasterol and beta-sitosterol. The secreted form of NCP2 regulates biliary cholesterol secretion via stimulation of ABCG5/ABCG8-mediated cholesterol transport. The polypeptide is NPC intracellular cholesterol transporter 2 (Bos taurus (Bovine)).